Reading from the N-terminus, the 265-residue chain is Hydroxyethylthiazole kinase (265 aa).

M43 is a binding site for substrate. Residues R119 and S165 each contribute to the ATP site. Residue A192 coordinates substrate.

Belongs to the Thz kinase family. The cofactor is Mg(2+).

It carries out the reaction 5-(2-hydroxyethyl)-4-methylthiazole + ATP = 4-methyl-5-(2-phosphooxyethyl)-thiazole + ADP + H(+). It functions in the pathway cofactor biosynthesis; thiamine diphosphate biosynthesis; 4-methyl-5-(2-phosphoethyl)-thiazole from 5-(2-hydroxyethyl)-4-methylthiazole: step 1/1. Catalyzes the phosphorylation of the hydroxyl group of 4-methyl-5-beta-hydroxyethylthiazole (THZ). The polypeptide is Hydroxyethylthiazole kinase (Haemophilus influenzae (strain ATCC 51907 / DSM 11121 / KW20 / Rd)).